Reading from the N-terminus, the 182-residue chain is Ribosome maturation factor RimM (182 aa).

In terms of domain architecture, PRC barrel spans 103-182 (EDDYYWKDLM…RVEVDWDPGF (80 aa)).

The protein belongs to the RimM family. As to quaternary structure, binds ribosomal protein uS19.

It localises to the cytoplasm. Functionally, an accessory protein needed during the final step in the assembly of 30S ribosomal subunit, possibly for assembly of the head region. Essential for efficient processing of 16S rRNA. May be needed both before and after RbfA during the maturation of 16S rRNA. It has affinity for free ribosomal 30S subunits but not for 70S ribosomes. The protein is Ribosome maturation factor RimM of Yersinia pestis (strain Pestoides F).